The following is a 484-amino-acid chain: Notoamide biosynthesis transcriptional activator notL (484 aa).

Residues 33–60 constitute a DNA-binding region (zn(2)-C6 fungal-type); that stretch reads CQSCATSKIKCPKEKTSCSKCQARGIEC. Disordered stretches follow at residues 70-154 and 363-387; these read RRRE…NNSV and GGGE…QMRP. Positions 76–122 are enriched in low complexity; the sequence is TGHPTSCTSTSTTANSSSSSSRSSNSSSSSSTSPPSSSSSLSSNPEP. Positions 123 to 133 are enriched in basic and acidic residues; that stretch reads TSDKDLPRPRS. Polar residues-rich tracts occupy residues 139–154 and 368–378; these read ANST…NNSV and DTGQRPATSMI.

The protein localises to the nucleus. Transcription factor that probably regulates the expression of the gene cluster that mediates the biosynthesis of notoamide, a fungal indole alkaloid that belongs to a family of natural products containing a characteristic bicyclo[2.2.2]diazaoctane core. This is Notoamide biosynthesis transcriptional activator notL from Aspergillus sp. (strain MF297-2).